Consider the following 369-residue polypeptide: L-lactate oxidase (369 aa).

The FMN hydroxy acid dehydrogenase domain occupies 13–369 (EKKLNVLNLD…KNAKLLNIRY (357 aa)). Pyruvate is bound at residue tyrosine 39. FMN is bound by residues 92 to 94 (PAA), serine 121, and glutamine 143. Residue tyrosine 145 participates in pyruvate binding. Threonine 171 contacts FMN. Position 180 (arginine 180) interacts with pyruvate. Positions 240 and 262 each coordinate FMN. Residues histidine 264 and arginine 267 each contribute to the pyruvate site. Residue histidine 264 is the Proton acceptor of the active site. FMN-binding positions include 295–299 (DSGIR) and arginine 319.

It belongs to the FMN-dependent alpha-hydroxy acid dehydrogenase family. Homotetramer. FMN serves as cofactor.

The enzyme catalyses (S)-lactate + O2 = pyruvate + H2O2. In terms of biological role, catalyzes the oxidation of (S)-lactate (L-lactate) to pyruvate, with a reduction of O2 to H2O2. May be involved in the utilization of L-lactate as an energy source for growth. This is L-lactate oxidase from Lentilactobacillus hilgardii (strain ATCC 8290 / DSM 20176 / CCUG 30140 / JCM 1155 / KCTC 3500 / NBRC 15886 / NCIMB 8040 / NRRL B-1843 / 9).